Here is a 301-residue protein sequence, read N- to C-terminus: Pyridoxal 5'-phosphate synthase subunit Pdx1 (301 aa).

Asp26 provides a ligand contact to D-ribose 5-phosphate. Residue Lys83 is the Schiff-base intermediate with D-ribose 5-phosphate of the active site. Gly155 lines the D-ribose 5-phosphate pocket. Arg167 contacts D-glyceraldehyde 3-phosphate. D-ribose 5-phosphate is bound by residues Gly216 and 237–238 (GS).

It belongs to the PdxS/SNZ family. In terms of assembly, homohexamer and homododecamer. In the presence of Pdx2, forms a dodecamer of heterodimers.

The protein resides in the cytoplasm. The catalysed reaction is aldehydo-D-ribose 5-phosphate + D-glyceraldehyde 3-phosphate + L-glutamine = pyridoxal 5'-phosphate + L-glutamate + phosphate + 3 H2O + H(+). It functions in the pathway cofactor biosynthesis; pyridoxal 5'-phosphate biosynthesis. Functionally, catalyzes the formation of pyridoxal 5'-phosphate from ribose 5-phosphate (RBP), glyceraldehyde 3-phosphate (G3P) and ammonia. The ammonia is provided by Pdx2. Can also use ribulose 5-phosphate and dihydroxyacetone phosphate as substrates, resulting from enzyme-catalyzed isomerization of RBP and G3P, respectively. This chain is Pyridoxal 5'-phosphate synthase subunit Pdx1 (pdx1), found in Plasmodium falciparum (isolate 3D7).